We begin with the raw amino-acid sequence, 440 residues long: MSYFEHIPAIRYEGPQSDNPLAYRHYDRTKRVLGKTLEEHLRIAVCYWHTFVWPGQDVFGQGALRRPWQQPGEPLERARQKADAAFAFFTKLGTPFYTFHDTDVAPEGANLHEYVENFARMVDYLGEHQQASGVRLLWGTANLFSHPRFAAGAATSPNPDAFAWAATQVCHALDATHRLGGENYVLWGGREGYETLLNTDLAREREQLARFLAMVVEHKHRIGFTGALLIEPKPQEPTKHQYDYDVATVHGLLTQYGLQNEIRVNIEANHATLAGHSFHHEIANAFALGVFGSVDANRGDPQNGWDTDQFPNSVEELTLAFYEILRHGGFTTGGMNFDAKVRRQSVDPEDLFHGHIGAIDVLALALERAAVLVENDRLDALRRRRYAQWDSEFGRKILAGGYSLQSLAADALARGVNPQHASGAQERLENIVNQAIYALR.

Residues His100 and Asp103 contribute to the active site. Residues Glu231, Glu267, His270, Asp295, Asp306, Asp308, and Asp338 each coordinate Mg(2+).

This sequence belongs to the xylose isomerase family. Homotetramer. It depends on Mg(2+) as a cofactor.

Its subcellular location is the cytoplasm. The enzyme catalyses alpha-D-xylose = alpha-D-xylulofuranose. The polypeptide is Xylose isomerase (Burkholderia thailandensis (strain ATCC 700388 / DSM 13276 / CCUG 48851 / CIP 106301 / E264)).